A 327-amino-acid chain; its full sequence is Probable pectinesterase A (327 aa).

An N-terminal signal peptide occupies residues 1–19; the sequence is MHTPYLLGALAALAATAVG. An N-linked (GlcNAc...) asparagine glycan is attached at Asn-84. Gln-145 lines the substrate pocket. Asp-168 serves as the catalytic Proton donor. Asp-189 serves as the catalytic Nucleophile. Substrate-binding residues include Arg-249 and Trp-251. Asn-288 carries an N-linked (GlcNAc...) asparagine glycan.

This sequence belongs to the pectinesterase family.

It localises to the secreted. The enzyme catalyses [(1-&gt;4)-alpha-D-galacturonosyl methyl ester](n) + n H2O = [(1-&gt;4)-alpha-D-galacturonosyl](n) + n methanol + n H(+). The protein operates within glycan metabolism; pectin degradation; 2-dehydro-3-deoxy-D-gluconate from pectin: step 1/5. In terms of biological role, involved in maceration and soft-rotting of plant tissue. In Aspergillus niger (strain ATCC MYA-4892 / CBS 513.88 / FGSC A1513), this protein is Probable pectinesterase A (pmeA).